The sequence spans 279 residues: UPF0276 protein SO_2008 (279 aa).

This sequence belongs to the UPF0276 family.

This Shewanella oneidensis (strain ATCC 700550 / JCM 31522 / CIP 106686 / LMG 19005 / NCIMB 14063 / MR-1) protein is UPF0276 protein SO_2008.